The following is a 208-amino-acid chain: Platelet-activating factor receptor (208 aa).

Topologically, residues 1–16 (MEPHDSSHVDSEFRYT) are extracellular. A helical membrane pass occupies residues 17–38 (LFPIVYSIIFVLGVIANGYVLW). At 39–54 (VFARLYPSKKFNEIKI) the chain is on the cytoplasmic side. Residues 55 to 74 (FMVNLTMADMLFLITLPLWI) traverse the membrane as a helical segment. The Extracellular segment spans residues 75–91 (VYYQNGGNWIFPKFLCN). Residues cysteine 90 and cysteine 173 are joined by a disulfide bond. A helical membrane pass occupies residues 92–113 (LAGCLFFINTYCSVAFLGVITY). Residues 114-133 (NRFQAVTRPIKTAQANTRKR) are Cytoplasmic-facing. A helical transmembrane segment spans residues 134 to 155 (GISLSLVIWVAIVGAASYFFIL). The Extracellular segment spans residues 156 to 184 (DSTNTVPNSAGSGNITRCFEHYEKGSVPV). N-linked (GlcNAc...) asparagine glycosylation occurs at asparagine 169. Residues 185–205 (LIIHIFIVFSFFLVFLIILFC) form a helical membrane-spanning segment. Topologically, residues 206–208 (NLV) are cytoplasmic.

It belongs to the G-protein coupled receptor 1 family. As to quaternary structure, interacts with ARRB1.

It localises to the cell membrane. In terms of biological role, receptor for platelet activating factor, a chemotactic phospholipid mediator that possesses potent inflammatory, smooth-muscle contractile and hypotensive activity. Seems to mediate its action via a G protein that activates a phosphatidylinositol-calcium second messenger system. This Macaca mulatta (Rhesus macaque) protein is Platelet-activating factor receptor (PTAFR).